Reading from the N-terminus, the 90-residue chain is Exodeoxyribonuclease 7 small subunit (90 aa).

Positions 62–90 (QDGQANPMSSQGHTAGEYPDDEAEEAEEA) are disordered. Residues 64-74 (GQANPMSSQGH) show a composition bias toward polar residues. Over residues 79-90 (YPDDEAEEAEEA) the composition is skewed to acidic residues.

This sequence belongs to the XseB family. In terms of assembly, heterooligomer composed of large and small subunits.

It is found in the cytoplasm. It catalyses the reaction Exonucleolytic cleavage in either 5'- to 3'- or 3'- to 5'-direction to yield nucleoside 5'-phosphates.. In terms of biological role, bidirectionally degrades single-stranded DNA into large acid-insoluble oligonucleotides, which are then degraded further into small acid-soluble oligonucleotides. In Desulfovibrio desulfuricans (strain ATCC 27774 / DSM 6949 / MB), this protein is Exodeoxyribonuclease 7 small subunit.